Consider the following 607-residue polypeptide: MSHFPKLLSSQIAYDVARTMLDGFDKHYRLFREVSIEAKARFEVGDWHGLQQLQRDRIAFYNQRVHETIVTLQDEYDAEDIEDEIWQQIKLHYIGLLTNHHQPELAETFFNSVFTRIQHRSYFNNDFIFVRPAISTEYIENEESPIKPTYRAYYPGSREGMAACFERIVNNFQLERPFEDLKRDAGYVARAITEHFGEFRIAPNFQVHTLSSLFFRNKTAFVIGRVINGDHTYPLVVPIIHAASGKLVLDTVLLHREQILILFSFAHAYFMVDMEIPSAYVTFLRDLLPRKSRAEIYTSLGLQKQGKNLFYRDFLHHLQHSSDKFISAPGIKGLVMLVFTLPSFPYVFKVIRDFFPAPKETTRELVKSKYQLVKQHDRVGRMADTLEYSDVAFPLSRFDDALVRELEQHAPSMIEYQRSKQGEDEIVVRHVYIERRMTPLNIWLQEGTDEQVDHGILEYGNAVKELIAANIFPGDMLYKNFGVTRHGRVVFYDYDEIEYLTDCNVRRVPAPRNEEEEMSGEVWYTVRPHDIFPETYGTFLLGDPRVRAAFMRHHPDFFDAAMWQHHKDRLLAGHVHDFFAYHSQERFIHRYGSGATGPATEEPRRAA.

Residues 328-334 (APGIKGL) and K349 contribute to the ATP site. Residue D384 is part of the active site.

It belongs to the AceK family.

It is found in the cytoplasm. The catalysed reaction is L-seryl-[isocitrate dehydrogenase] + ATP = O-phospho-L-seryl-[isocitrate dehydrogenase] + ADP + H(+). Functionally, bifunctional enzyme which can phosphorylate or dephosphorylate isocitrate dehydrogenase (IDH) on a specific serine residue. This is a regulatory mechanism which enables bacteria to bypass the Krebs cycle via the glyoxylate shunt in response to the source of carbon. When bacteria are grown on glucose, IDH is fully active and unphosphorylated, but when grown on acetate or ethanol, the activity of IDH declines drastically concomitant with its phosphorylation. This Cupriavidus metallidurans (strain ATCC 43123 / DSM 2839 / NBRC 102507 / CH34) (Ralstonia metallidurans) protein is Isocitrate dehydrogenase kinase/phosphatase.